The following is a 123-amino-acid chain: Large ribosomal subunit protein bL17 (123 aa).

This sequence belongs to the bacterial ribosomal protein bL17 family. In terms of assembly, part of the 50S ribosomal subunit. Contacts protein L32.

The polypeptide is Large ribosomal subunit protein bL17 (Borreliella afzelii (strain PKo) (Borrelia afzelii)).